Reading from the N-terminus, the 354-residue chain is Rhodopsin (354 aa).

Residues 1–36 (MNGTEGPNFYIPMSNKTGVVRSPFDYPQYYLAEPWK) lie on the Extracellular side of the membrane. N-linked (GlcNAc...) (hybrid) asparagine glycosylation is present at asparagine 2. An N-linked (GlcNAc...) asparagine glycan is attached at asparagine 15. The helical transmembrane segment at 37–61 (YSVLAAYMFLLILLGLPINFMTLYV) threads the bilayer. Topologically, residues 62 to 73 (TIQHKKLRTPLN) are cytoplasmic. Residues 74–96 (YILLNLGVCNHFMVLCGFTITMY) form a helical membrane-spanning segment. The Extracellular segment spans residues 97-110 (TSLHGYFVFGQTGC). Cysteine 110 and cysteine 187 are oxidised to a cystine. Residues 111-133 (YFEGFFATLGGEIALWSLVVLAI) form a helical membrane-spanning segment. Residues 134 to 136 (ERY) carry the 'Ionic lock' involved in activated form stabilization motif. At 134-152 (ERYIVVCKPMSNFRFGENH) the chain is on the cytoplasmic side. The chain crosses the membrane as a helical span at residues 153–173 (AMMGVAFTWIMALACAVPPLF). The Extracellular segment spans residues 174 to 202 (GWSRYIPEGMQCSCGVDYYTLKPEVNNES). The helical transmembrane segment at 203 to 224 (FVIYMFVVHFLIPLIIISFCYG) threads the bilayer. Residues 225–252 (RLVCTVKEAAAQQQESATTQKAEKEVTR) are Cytoplasmic-facing. Residues 253–274 (MVIIMVIFFLICWVPYAYVAFY) form a helical membrane-spanning segment. The Extracellular segment spans residues 275-286 (IFTHQGSEFGPI). The helical transmembrane segment at 287 to 308 (FMTVPAFFAKSSAIYNPVIYIM) threads the bilayer. The residue at position 296 (lysine 296) is an N6-(retinylidene)lysine. Over 309-354 (LNKQFRNCMITTLCCGKNPFGDDDASSAATSKTEATSVSTSQVSPA) the chain is Cytoplasmic. S-palmitoyl cysteine attachment occurs at residues cysteine 322 and cysteine 323. Positions 332–354 (DASSAATSKTEATSVSTSQVSPA) are disordered. Positions 334-354 (SSAATSKTEATSVSTSQVSPA) are enriched in low complexity.

It belongs to the G-protein coupled receptor 1 family. Opsin subfamily. In terms of processing, contains one covalently linked retinal chromophore. Upon light absorption, the covalently bound 11-cis-retinal is converted to all-trans-retinal. After hydrolysis of the Schiff base and release of the covalently bound all-trans-retinal, active rhodopsin is regenerated by binding of a fresh molecule of 11-cis-retinal. As to expression, detected in retina rod photoreceptor cell outer segments (at protein level). Detected in retina.

Its subcellular location is the membrane. It localises to the cell projection. The protein localises to the cilium. The protein resides in the photoreceptor outer segment. Photoreceptor required for image-forming vision at low light intensity. Required for photoreceptor cell viability after birth. Light-induced isomerization of 11-cis to all-trans retinal triggers a conformational change that activates signaling via G-proteins. Subsequent receptor phosphorylation mediates displacement of the bound G-protein alpha subunit by arrestin and terminates signaling. The sequence is that of Rhodopsin (RHO) from Lithobates pipiens (Northern leopard frog).